Reading from the N-terminus, the 331-residue chain is UPF0194 membrane protein CKO_02332 (331 aa).

A signal peptide spans 1–15; that stretch reads MKKPVVIALAVAALA. Positions 142-207 form a coiled coil; the sequence is ISANDLENAR…ELDLQDTTLI (66 aa).

Belongs to the UPF0194 family.

Its subcellular location is the periplasm. The polypeptide is UPF0194 membrane protein CKO_02332 (Citrobacter koseri (strain ATCC BAA-895 / CDC 4225-83 / SGSC4696)).